A 237-amino-acid chain; its full sequence is tRNA (guanine-N(7)-)-methyltransferase (237 aa).

The tract at residues 1-24 (MTAHKPGDPTTLNRLYGRSKGKPL) is disordered. S-adenosyl-L-methionine contacts are provided by Glu62, Glu87, Asp119, and Asp141. Asp141 is an active-site residue. Substrate-binding positions include Lys145, Asp177, and 216 to 219 (TRYE).

This sequence belongs to the class I-like SAM-binding methyltransferase superfamily. TrmB family.

It carries out the reaction guanosine(46) in tRNA + S-adenosyl-L-methionine = N(7)-methylguanosine(46) in tRNA + S-adenosyl-L-homocysteine. The protein operates within tRNA modification; N(7)-methylguanine-tRNA biosynthesis. Its function is as follows. Catalyzes the formation of N(7)-methylguanine at position 46 (m7G46) in tRNA. The polypeptide is tRNA (guanine-N(7)-)-methyltransferase (Sphingopyxis alaskensis (strain DSM 13593 / LMG 18877 / RB2256) (Sphingomonas alaskensis)).